The primary structure comprises 623 residues: Zona pellucida sperm-binding protein 1 (623 aa).

Positions 1–20 (MAWGCFVVLLLLAAAPLRLG) are cleaved as a signal peptide. Glutamine 21 is subject to Pyrrolidone carboxylic acid. At 21–590 (QRLHLEPGFE…GSSRNSSSRM (570 aa)) the chain is on the extracellular side. 2 N-linked (GlcNAc...) asparagine glycosylation sites follow: asparagine 49 and asparagine 68. Positions 182-201 (IHPTPAPPSLGPGPAGSTVP) are disordered. In terms of domain architecture, P-type spans 226 to 266 (ERCQVASGHIPCMVNGSSKETCQQAGCCYDSTKEEPCYYGN). 3 cysteine pairs are disulfide-bonded: cysteine 228/cysteine 253, cysteine 237/cysteine 252, and cysteine 247/cysteine 262. The N-linked (GlcNAc...) asparagine glycan is linked to asparagine 240. The ZP domain occupies 271 to 542 (QCFKSGYFTL…DTCSTTCDSG (272 aa)). An N-linked (GlcNAc...) asparagine glycan is attached at asparagine 371. A disulfide bridge links cysteine 449 with cysteine 470. The propeptide at 547–623 (RRSSGHHNIT…AQKLWEGIRY (77 aa)) is removed in mature form. 2 N-linked (GlcNAc...) asparagine glycosylation sites follow: asparagine 554 and asparagine 585. Residues 591–611 (LLLLLAITLALAAGIFVGLIW) traverse the membrane as a helical segment. Residues 612–623 (AWAQKLWEGIRY) are Cytoplasmic-facing.

It belongs to the ZP domain family. ZPB subfamily. Polymers of ZP2 and ZP3 organized into long filaments cross-linked by ZP1 homodimers. Interacts with ZP3. Proteolytically cleaved before the transmembrane segment to yield the secreted ectodomain incorporated in the zona pellucida. Post-translationally, O-glycosylated. As to expression, expressed in oocytes.

Its subcellular location is the zona pellucida. The protein localises to the cell membrane. Component of the zona pellucida, an extracellular matrix surrounding oocytes which mediates sperm binding, induction of the acrosome reaction and prevents post-fertilization polyspermy. The zona pellucida is composed of 3 to 4 glycoproteins, ZP1, ZP2, ZP3, and ZP4. ZP1 ensures the structural integrity of the zona pellucida. This Mus musculus (Mouse) protein is Zona pellucida sperm-binding protein 1 (Zp1).